Here is a 204-residue protein sequence, read N- to C-terminus: DNA polymerase epsilon subunit D (204 aa).

The span at 165–177 (KEVQRRRAEKTPA) shows a compositional bias: basic and acidic residues. The segment at 165–204 (KEVQRRRAEKTPAADEGQAEEGDAADEEEGSHKRAKLDEH) is disordered. The span at 181-193 (GQAEEGDAADEEE) shows a compositional bias: acidic residues. The segment covering 194–204 (GSHKRAKLDEH) has biased composition (basic and acidic residues).

Heterotetramer. Consists of four subunits: POL2, DPB2, DPB3 and DPB4.

It localises to the nucleus. In terms of biological role, as accessory component of the DNA polymerase epsilon (DNA polymerase II) participates in chromosomal DNA replication. The polypeptide is DNA polymerase epsilon subunit D (DPB4) (Eremothecium gossypii (strain ATCC 10895 / CBS 109.51 / FGSC 9923 / NRRL Y-1056) (Yeast)).